Consider the following 195-residue polypeptide: Elongation factor Ts (195 aa).

Positions 81-84 are involved in Mg(2+) ion dislocation from EF-Tu; the sequence is TDFV.

It belongs to the EF-Ts family.

Its subcellular location is the cytoplasm. Its function is as follows. Associates with the EF-Tu.GDP complex and induces the exchange of GDP to GTP. It remains bound to the aminoacyl-tRNA.EF-Tu.GTP complex up to the GTP hydrolysis stage on the ribosome. The protein is Elongation factor Ts of Rubrobacter xylanophilus (strain DSM 9941 / JCM 11954 / NBRC 16129 / PRD-1).